A 357-amino-acid polypeptide reads, in one-letter code: Alanine racemase, catabolic (357 aa).

K33 (proton acceptor; specific for D-alanine) is an active-site residue. The residue at position 33 (K33) is an N6-(pyridoxal phosphate)lysine. Position 122 is an N6-carboxylysine (K122). R129 is a binding site for substrate. The active-site Proton acceptor; specific for L-alanine is Y253. M301 is a binding site for substrate.

It belongs to the alanine racemase family. As to quaternary structure, homodimer. It depends on pyridoxal 5'-phosphate as a cofactor.

The enzyme catalyses L-alanine = D-alanine. Isomerizes L-alanine to D-alanine which is then oxidized to pyruvate by DadA. In Pseudomonas aeruginosa (strain ATCC 15692 / DSM 22644 / CIP 104116 / JCM 14847 / LMG 12228 / 1C / PRS 101 / PAO1), this protein is Alanine racemase, catabolic.